The sequence spans 469 residues: Acyltransferase clz18 (469 aa).

The next 7 membrane-spanning stretches (helical) occupy residues 21–41, 70–90, 134–154, 253–273, 346–366, 391–411, and 424–444; these read GLLS…LGYD, LFTI…CLFF, LSLL…TGFF, ILAA…PLFW, GLIV…LYSL, IYLI…SWVW, and VGFG…AAIF.

The protein belongs to the acyltransferase 3 family.

The protein resides in the membrane. Its pathway is secondary metabolite biosynthesis. Functionally, acyltransferase; part of the gene cluster that mediates the biosynthesis of squalestatin S1 (SQS1, also known as zaragozic acid A), a heavily oxidized fungal polyketide that offers potent cholesterol lowering activity by targeting squalene synthase (SS). SQS1 is composed of a 2,8-dioxobicyclic[3.2.1]octane-3,4,5-tricarboxyclic acid core that is connected to two lipophilic polyketide arms. These initial steps feature the priming of an unusual benzoic acid starter unit onto the highly reducing polyketide synthase clz14, followed by oxaloacetate extension and product release to generate a tricarboxylic acid containing product. The phenylalanine ammonia lyase (PAL) clz10 and the acyl-CoA ligase clz12 are involved in transforming phenylalanine into benzoyl-CoA. The citrate synthase-like protein clz17 is involved in connecting the C-alpha-carbons of the hexaketide chain and oxaloacetate to afford the tricarboxylic acid unit. The potential hydrolytic enzymes, clz11 and clz13, are in close proximity to pks2 and may participate in product release. On the other side, the tetraketide arm is synthesized by a the squalestatin tetraketide synthase clz2 and enzymatically esterified to the core in the last biosynthetic step, by the acetyltransferase clz6. The biosynthesis of the tetraketide must involve 3 rounds of chain extension. After the first and second rounds methyl-transfer occurs, and in all rounds of extension the ketoreductase and dehydratase are active. The enoyl reductase and C-MeT of clz2 are not active in the final round of extension. The acetyltransferase clz6 appears to have a broad substrate selectivity for its acyl CoA substrate, allowing the in vitro synthesis of novel squalestatins. The biosynthesis of SQS1 requires several oxidative steps likely performed by oxidoreductases clz3, clz15 and clz16. Finally, in support of the identification of the cluster as being responsible for SQS1 production, the cluster contains a gene encoding a putative squalene synthase (SS) clz20, suggesting a likely mechanism for self-resistance. The polypeptide is Acyltransferase clz18 (Cochliobolus lunatus (Filamentous fungus)).